The following is a 238-amino-acid chain: Chromosome partition protein MukE (238 aa).

The protein belongs to the MukE family. In terms of assembly, interacts, and probably forms a ternary complex, with MukF and MukB. The complex formation is stimulated by calcium or magnesium.

The protein localises to the cytoplasm. It is found in the nucleoid. Functionally, involved in chromosome condensation, segregation and cell cycle progression. May participate in facilitating chromosome segregation by condensation DNA from both sides of a centrally located replisome during cell division. Probably acts via its interaction with MukB and MukF. This chain is Chromosome partition protein MukE, found in Haemophilus ducreyi (strain 35000HP / ATCC 700724).